A 235-amino-acid chain; its full sequence is Phosphoribosylaminoimidazole-succinocarboxamide synthase (235 aa).

This sequence belongs to the SAICAR synthetase family.

The catalysed reaction is 5-amino-1-(5-phospho-D-ribosyl)imidazole-4-carboxylate + L-aspartate + ATP = (2S)-2-[5-amino-1-(5-phospho-beta-D-ribosyl)imidazole-4-carboxamido]succinate + ADP + phosphate + 2 H(+). Its pathway is purine metabolism; IMP biosynthesis via de novo pathway; 5-amino-1-(5-phospho-D-ribosyl)imidazole-4-carboxamide from 5-amino-1-(5-phospho-D-ribosyl)imidazole-4-carboxylate: step 1/2. The polypeptide is Phosphoribosylaminoimidazole-succinocarboxamide synthase (Clostridium novyi (strain NT)).